The chain runs to 861 residues: MGEISQEAVERYLEKNPCFAKEYFDKKLRVEALGVIFKNSHAGVQTGLSLPEMTQVEESAVCLELLQCMQDEAGSAEQMAHRALQRLAQLLQADCCSMFSCRARNGIPEVASRLLNVTPTSKFEDNLVAPDREVVFPLDIGIVGWVAHVKKALNVSDVKKNSHFSDFMDKQTGYVTRNLLAVPIVAGKEVLAVVMAVNKISAPEFSKQDEEVFSKYLSFVAVALRLQHTSYLYSVESRRSQILMWSANKVFEELTDVERQFHKALYTIRTYLNCDRYSIGLLDMTKEKEFYDEWPIKLGEVEPYKGPKTPDGREIIFYKIIDYILHGKEEINVIPSPPADHWTLVSGLPTYVAENGFICNMLNAPADEYFTFQKGPVDETGWVIKNVLSLPIVNKKEDIVGVATFYNRKDGKPFDEHDEHITETLTQFLGWSLLNTDTYERVNKLESRKDIAQEMVMNLTKATPDEISSILKFKEKLNVEVIEECEERQLLAILKEDLPDPRTADLYEFCFSDFPITEHELVKCGLRLFLEINVVEKFKVPVEVLTRWMYTVRKGYRPVTYHNWRHGFNVGQTMFTLLMTGRLKKYYTDLEAFAMLAAAFCHDIDHRGTNNLYQMKSTSPLARLHGTSILERHHLEYSKTLLQDESLNIFQNLNKRQFETVIHLFEVAIIATDLALYFKKRTMFQKIVDTCEQMQSEEETIKYVTSDPTKKEVIMAMMMTACDLSAITKPWEVQSQVALLVANEFWEQGDLERTVLQQQPIPMMDRSKKDELPKLQVGFIDFVCTFVYKEFSRFHGEITPMLNGLQNNRVEWKSLAEEYEAKVKVTEEEAGKQEEEASDGKAATDLGGSAEDKKSKTCLML.

GAF domains lie at 75–224 and 256–433; these read SAEQ…AVAL and DVER…GWSL. Residues Ser-97, Asn-116, 169-172, and Thr-176 each bind 3',5'-cyclic GMP; that span reads DKQT. The PDEase domain occupies 486-819; sequence EERQLLAILK…VEWKSLAEEY (334 aa). The active-site Proton donor is the His-562. Residues His-566, His-602, Asp-603, and Asp-723 each contribute to the a divalent metal cation site. Positions 826–839 are enriched in basic and acidic residues; sequence TEEEAGKQEEEASD. The tract at residues 826 to 861 is disordered; that stretch reads TEEEAGKQEEEASDGKAATDLGGSAEDKKSKTCLML. The residue at position 858 (Cys-858) is a Cysteine methyl ester. Cys-858 is lipidated: S-geranylgeranyl cysteine. The propeptide at 859 to 861 is removed in mature form; it reads LML.

The protein belongs to the cyclic nucleotide phosphodiesterase family. Composed of two alpha' subunits that are associated with 3 smaller proteins of 11, 13, and 15 kDa. A divalent metal cation serves as cofactor.

The protein resides in the cell membrane. It catalyses the reaction 3',5'-cyclic GMP + H2O = GMP + H(+). Its function is as follows. As cone-specific cGMP phosphodiesterase, it plays an essential role in light detection and cone phototransduction by rapidly decreasing intracellular levels of cGMP. The chain is Cone cGMP-specific 3',5'-cyclic phosphodiesterase subunit alpha' (Pde6c) from Mus musculus (Mouse).